The chain runs to 83 residues: Putative membrane protein insertion efficiency factor (83 aa).

Residues 62–83 (KGGYDPVPPKSVKSAGNSKDSK) are disordered.

It belongs to the UPF0161 family.

Its subcellular location is the cell inner membrane. Its function is as follows. Could be involved in insertion of integral membrane proteins into the membrane. This chain is Putative membrane protein insertion efficiency factor, found in Chlorobaculum tepidum (strain ATCC 49652 / DSM 12025 / NBRC 103806 / TLS) (Chlorobium tepidum).